We begin with the raw amino-acid sequence, 294 residues long: Elongation factor Ts (294 aa).

The segment at 80–83 is involved in Mg(2+) ion dislocation from EF-Tu; it reads TDFV.

This sequence belongs to the EF-Ts family.

It is found in the cytoplasm. Its function is as follows. Associates with the EF-Tu.GDP complex and induces the exchange of GDP to GTP. It remains bound to the aminoacyl-tRNA.EF-Tu.GTP complex up to the GTP hydrolysis stage on the ribosome. The chain is Elongation factor Ts from Listeria innocua serovar 6a (strain ATCC BAA-680 / CLIP 11262).